The sequence spans 219 residues: Urease subunit gamma/beta (219 aa).

The segment at 1–101 is urease gamma; the sequence is MFLTPREQEK…LVTVRNPIKS (101 aa). Residues 102–219 are urease beta; sequence SKKTLNTYII…IKRAKERGFA (118 aa).

In the N-terminal section; belongs to the urease gamma subunit family. The protein in the C-terminal section; belongs to the urease beta subunit family. Heterohexamer of 3 UreC (alpha) and 3 UreAB (gamma/beta) subunits.

The protein resides in the cytoplasm. The catalysed reaction is urea + 2 H2O + H(+) = hydrogencarbonate + 2 NH4(+). The protein operates within nitrogen metabolism; urea degradation; CO(2) and NH(3) from urea (urease route): step 1/1. This Sulfurisphaera tokodaii (strain DSM 16993 / JCM 10545 / NBRC 100140 / 7) (Sulfolobus tokodaii) protein is Urease subunit gamma/beta.